We begin with the raw amino-acid sequence, 77 residues long: Putative antitoxin VapB3 (77 aa).

It belongs to the UPF0330 family.

Its function is as follows. Possibly the antitoxin component of a type II toxin-antitoxin (TA) system. Its cognate toxin is VapC3 (Potential). This is Putative antitoxin VapB3 (vapB3) from Methanocaldococcus jannaschii (strain ATCC 43067 / DSM 2661 / JAL-1 / JCM 10045 / NBRC 100440) (Methanococcus jannaschii).